We begin with the raw amino-acid sequence, 475 residues long: ADP-ribosyltransferase toxin AexT (475 aa).

One can recognise a Bacterial Rho-GAP domain in the interval 93 to 226 (VSPEDLQRLM…LQRAVKAEVA (134 aa)). A TR mART core domain is found at 260-436 (EGLQEQFGLE…RVLEEASLGE (177 aa)). Active-site residues include arginine 340, serine 364, and glutamate 403.

It is found in the secreted. In terms of biological role, directly involved in the toxicity for RTG-2 (rainbow trout gonad) fish cells. This is ADP-ribosyltransferase toxin AexT (aexT) from Aeromonas salmonicida.